Reading from the N-terminus, the 146-residue chain is Putative transposon Ty5-1 protein YCL075W (146 aa).

The sequence is that of Putative transposon Ty5-1 protein YCL075W (TY5B) from Saccharomyces cerevisiae (strain ATCC 204508 / S288c) (Baker's yeast).